The following is a 107-amino-acid chain: Toxin MT2730 (107 aa).

The segment at Met-1–Ala-42 is disordered.

Its function is as follows. Toxic component of a type II toxin-antitoxin (TA) system. Its toxic effect is neutralized by coexpression with cognate antitoxin MT2731. The protein is Toxin MT2730 of Mycobacterium tuberculosis (strain CDC 1551 / Oshkosh).